We begin with the raw amino-acid sequence, 461 residues long: Demethyllactenocin mycarosyltransferase (461 aa).

Positions 1-21 are disordered; the sequence is MAGLRPGAGVPPGTPWPISPG.

Belongs to the UDP-glycosyltransferase family.

It carries out the reaction dTDP-beta-L-mycarose + demethyllactenocin = demethylmacrocin + dTDP + H(+). In terms of biological role, involved in the biosynthesis of mycarose which is a 6-deoxyhexose sugar required during production of the macrolide antibiotic tylosin. Catalyzes the transfer of L-mycarosyl from dTDP-beta-L-mycarose to demethyllactenocin to yield demethylmacrocin. This is Demethyllactenocin mycarosyltransferase (tylCV) from Streptomyces fradiae (Streptomyces roseoflavus).